We begin with the raw amino-acid sequence, 242 residues long: Triosephosphate isomerase (242 aa).

8 to 10 (NWK) provides a ligand contact to substrate. Histidine 98 serves as the catalytic Electrophile. The Proton acceptor role is filled by glutamate 167. Residues glycine 173, serine 205, and 226–227 (GG) contribute to the substrate site.

The protein belongs to the triosephosphate isomerase family. Homodimer.

It localises to the cytoplasm. The enzyme catalyses D-glyceraldehyde 3-phosphate = dihydroxyacetone phosphate. It participates in carbohydrate biosynthesis; gluconeogenesis. The protein operates within carbohydrate degradation; glycolysis; D-glyceraldehyde 3-phosphate from glycerone phosphate: step 1/1. Involved in the gluconeogenesis. Catalyzes stereospecifically the conversion of dihydroxyacetone phosphate (DHAP) to D-glyceraldehyde-3-phosphate (G3P). The sequence is that of Triosephosphate isomerase from Mesomycoplasma hyopneumoniae (strain 232) (Mycoplasma hyopneumoniae).